A 1334-amino-acid polypeptide reads, in one-letter code: DNA-directed RNA polymerase subunit beta' (1334 aa).

Positions 213, 284, 291, and 294 each coordinate Zn(2+). Residues 1299–1308 show a composition bias toward low complexity; the sequence is SSRGSSRFSR. The interval 1299–1334 is disordered; sequence SSRGSSRFSRQPISDRWSEADEEGEEDDFEEDYEEE. Residues 1318-1334 show a composition bias toward acidic residues; sequence ADEEGEEDDFEEDYEEE.

It belongs to the RNA polymerase beta' chain family. RpoC2 subfamily. In cyanobacteria the RNAP catalytic core is composed of 2 alpha, 1 beta, 1 beta', 1 gamma and 1 omega subunit. When a sigma factor is associated with the core the holoenzyme is formed, which can initiate transcription. Zn(2+) is required as a cofactor.

It carries out the reaction RNA(n) + a ribonucleoside 5'-triphosphate = RNA(n+1) + diphosphate. Its function is as follows. DNA-dependent RNA polymerase catalyzes the transcription of DNA into RNA using the four ribonucleoside triphosphates as substrates. This chain is DNA-directed RNA polymerase subunit beta', found in Microcystis aeruginosa (strain NIES-843 / IAM M-2473).